A 253-amino-acid polypeptide reads, in one-letter code: Phosphoglycerate mutase 2 (253 aa).

Thr-3 carries the post-translational modification Phosphothreonine. Substrate is bound by residues 10–17 (RHGESSWN), 23–24 (CG), Arg-62, 89–92 (ERHY), Lys-100, and 116–117 (RR). The Tele-phosphohistidine intermediate role is filled by His-11. Phosphoserine occurs at positions 14 and 15. Glu-89 acts as the Proton donor/acceptor in catalysis. Ser-118 is modified (phosphoserine). A Phosphothreonine modification is found at Thr-121. Phosphotyrosine is present on residues Tyr-132 and Tyr-133. Ser-135 carries the post-translational modification Phosphoserine. Thr-152 is modified (phosphothreonine). Residue 187-188 (GN) coordinates substrate.

This sequence belongs to the phosphoglycerate mutase family. BPG-dependent PGAM subfamily. Homodimer. Interacts with ENO1.

It carries out the reaction (2R)-2-phosphoglycerate = (2R)-3-phosphoglycerate. The catalysed reaction is (2R)-3-phospho-glyceroyl phosphate = (2R)-2,3-bisphosphoglycerate + H(+). In terms of biological role, interconversion of 3- and 2-phosphoglycerate with 2,3-bisphosphoglycerate as the primer of the reaction. Can also catalyze the reaction of EC 5.4.2.4 (synthase), but with a reduced activity. This chain is Phosphoglycerate mutase 2 (Pgam2), found in Rattus norvegicus (Rat).